Here is a 135-residue protein sequence, read N- to C-terminus: CDGSH iron-sulfur domain-containing protein 2B (135 aa).

Over 1–37 (MVLETISKIIKTQLPAYLKKFPLPETIGGFARLTVLD) the chain is Lumenal. A helical transmembrane segment spans residues 38–60 (WLRLLPLLGILTLLGYLTIRPFL). Over 61–135 (PKKKKQKDSL…GPLILKKKII (75 aa)) the chain is Cytoplasmic. C99, C101, C110, and H114 together coordinate [2Fe-2S] cluster.

It belongs to the CISD protein family. CISD2 subfamily. In terms of assembly, homodimer. [2Fe-2S] cluster is required as a cofactor.

The protein resides in the endoplasmic reticulum membrane. It is found in the mitochondrion outer membrane. Regulator of autophagy that contributes to antagonize becn1-mediated cellular autophagy at the endoplasmic reticulum. Participates in the interaction of bcl2 with becn1 and is required for bcl2-mediated depression of endoplasmic reticulum Ca(2+) stores during autophagy. The chain is CDGSH iron-sulfur domain-containing protein 2B (cisd2b) from Oncorhynchus mykiss (Rainbow trout).